Consider the following 456-residue polypeptide: UDP-N-acetylmuramate--L-alanine ligase (456 aa).

Residue 112-118 (GAHGKTT) participates in ATP binding.

It belongs to the MurCDEF family.

The protein localises to the cytoplasm. It catalyses the reaction UDP-N-acetyl-alpha-D-muramate + L-alanine + ATP = UDP-N-acetyl-alpha-D-muramoyl-L-alanine + ADP + phosphate + H(+). It participates in cell wall biogenesis; peptidoglycan biosynthesis. Its function is as follows. Cell wall formation. The sequence is that of UDP-N-acetylmuramate--L-alanine ligase from Desulfatibacillum aliphaticivorans.